The sequence spans 159 residues: Phosphopantetheine adenylyltransferase (159 aa).

S9 is a substrate binding site. ATP contacts are provided by residues 9–10 and H17; that span reads SF. Residues K41, L73, and K87 each contribute to the substrate site. ATP-binding positions include 88-90, E98, and 122-128; these read GLR and YSFLSSS.

The protein belongs to the bacterial CoaD family. Homohexamer. It depends on Mg(2+) as a cofactor.

It localises to the cytoplasm. It carries out the reaction (R)-4'-phosphopantetheine + ATP + H(+) = 3'-dephospho-CoA + diphosphate. The protein operates within cofactor biosynthesis; coenzyme A biosynthesis; CoA from (R)-pantothenate: step 4/5. Reversibly transfers an adenylyl group from ATP to 4'-phosphopantetheine, yielding dephospho-CoA (dPCoA) and pyrophosphate. The sequence is that of Phosphopantetheine adenylyltransferase from Streptomyces avermitilis (strain ATCC 31267 / DSM 46492 / JCM 5070 / NBRC 14893 / NCIMB 12804 / NRRL 8165 / MA-4680).